We begin with the raw amino-acid sequence, 286 residues long: Undecaprenyl-diphosphatase (286 aa).

Helical transmembrane passes span 5–25 (WFII…FLPV), 55–75 (IDAF…VLYW), 92–112 (SGFK…VLGL), 122–142 (LFNP…MIFA), 185–205 (IIGA…SFFL), 229–249 (MHIV…LIVV), and 264–284 (FAMY…FNVI).

The protein belongs to the UppP family.

The protein resides in the cell membrane. The catalysed reaction is di-trans,octa-cis-undecaprenyl diphosphate + H2O = di-trans,octa-cis-undecaprenyl phosphate + phosphate + H(+). In terms of biological role, catalyzes the dephosphorylation of undecaprenyl diphosphate (UPP). Confers resistance to bacitracin. In Clostridium novyi (strain NT), this protein is Undecaprenyl-diphosphatase.